Consider the following 274-residue polypeptide: Momilactone A synthase (274 aa).

This sequence belongs to the short-chain dehydrogenases/reductases (SDR) family.

The enzyme catalyses 3beta-hydroxy-9beta-pimara-7,15-dien-19,6beta-olide + NAD(+) = momilactone A + NADH + H(+). The catalysed reaction is 3beta-hydroxy-9beta-pimara-7,15-dien-19,6beta-olide + NADP(+) = momilactone A + NADPH + H(+). Its function is as follows. Involved in momilactone phytoalexins biosynthesis. Catalyzes the last step of momilactone A biosynthesis. The polypeptide is Momilactone A synthase (Oryza sativa subsp. japonica (Rice)).